The sequence spans 272 residues: MGEMEIEEIEAVLEKIWDLHDKLSDEIHLISKSHFLKSVKPSNRSEKRKNPHGNSGEDKRPGYVFIKGFAVDDNDSTIQEAKSLNAIRTALENLEDQLEFFHTIHTQQRTEKDVAIARLEQSRILLAMRLAEHHGKNYGVLEEALAFVGSIKSNSHYVSPDHLYDSSRNPDGANSIPDGIESNFVINAFASTFGFAKRALGFNHVKGVLGNAAIFAISVVAMLHLHQVATSEHHLQKKEDRFYRSQQRKTYGRDKSSADRSLDHLDVMMARG.

At 1-206 the chain is on the cytoplasmic side; the sequence is MGEMEIEEIE…KRALGFNHVK (206 aa). Residues 40–61 are disordered; that stretch reads KPSNRSEKRKNPHGNSGEDKRP. The stretch at 78 to 102 forms a coiled coil; that stretch reads IQEAKSLNAIRTALENLEDQLEFFH. Residues 207 to 225 traverse the membrane as a helical segment; the sequence is GVLGNAAIFAISVVAMLHL. Topologically, residues 226 to 272 are chloroplast intermembrane; that stretch reads HQVATSEHHLQKKEDRFYRSQQRKTYGRDKSSADRSLDHLDVMMARG.

Interacts (via C-terminus) with CDP1/PARC6 (via C-terminus). Interacts with ARC5/DRP5B. Expressed in young developing leaves, root tips, shoot apices, and flower buds (sepals, petals, stamens, and pistils), but not in developed tissues.

It is found in the plastid. The protein localises to the chloroplast outer membrane. Functionally, component of the plastid division machinery. Required to mediate the dissociation of ARC5/DRP5B from plastid outer envelope membranes (OEMs) at the midplastid constriction site in the cytoplasm, thus triggering ARC5/DRP5B ring turnover at the chloroplast division site. Binding to phosphatidylinositol 4-phosphate (PI4P) modulates negatively chloroplast division. This Arabidopsis thaliana (Mouse-ear cress) protein is Plastid division protein PDV1.